Reading from the N-terminus, the 136-residue chain is Psoriasis susceptibility 1 candidate gene 2 protein (136 aa).

The first 22 residues, Met-1–Gly-22, serve as a signal peptide directing secretion. The segment at Ile-20–Arg-136 is disordered. Composition is skewed to pro residues over residues Pro-44–Pro-69 and Pro-84–Pro-116. Over residues Val-118–Arg-136 the composition is skewed to basic and acidic residues.

Expressed in skin. Also expressed in heart and skeletal muscle.

Its subcellular location is the secreted. The polypeptide is Psoriasis susceptibility 1 candidate gene 2 protein (PSORS1C2) (Homo sapiens (Human)).